Here is a 143-residue protein sequence, read N- to C-terminus: Sirohydrochlorin cobaltochelatase (143 aa).

His-9 serves as the catalytic Proton acceptor. His-9 is a binding site for Co(2+). His-9 is a Ni(2+) binding site. Substrate contacts are provided by residues Glu-45 and 70–75 (LAHGIH). His-75 lines the Co(2+) pocket. His-75 contacts Ni(2+).

Belongs to the CbiX family. CbiXS subfamily. As to quaternary structure, homotetramer; dimer of dimers.

The catalysed reaction is Co-sirohydrochlorin + 2 H(+) = sirohydrochlorin + Co(2+). It catalyses the reaction Ni-sirohydrochlorin + 2 H(+) = sirohydrochlorin + Ni(2+). Its pathway is cofactor biosynthesis; adenosylcobalamin biosynthesis; cob(II)yrinate a,c-diamide from sirohydrochlorin (anaerobic route): step 1/10. Functionally, catalyzes the insertion of Co(2+) into sirohydrochlorin as part of the anaerobic pathway to cobalamin biosynthesis. Involved in the biosynthesis of the unique nickel-containing tetrapyrrole coenzyme F430, the prosthetic group of methyl-coenzyme M reductase (MCR), which plays a key role in methanogenesis and anaerobic methane oxidation. Catalyzes the insertion of Ni(2+) into sirohydrochlorin to yield Ni-sirohydrochlorin. This Methanocaldococcus jannaschii (strain ATCC 43067 / DSM 2661 / JAL-1 / JCM 10045 / NBRC 100440) (Methanococcus jannaschii) protein is Sirohydrochlorin cobaltochelatase.